Reading from the N-terminus, the 153-residue chain is Putative WASP homolog-associated protein with actin, membranes and microtubules-like protein 1 (153 aa).

Residues 113-151 (AIQFYEIQLELYEVKFEILKNKEILLTTQLDSLERLIKD) adopt a coiled-coil conformation.

In Homo sapiens (Human), this protein is Putative WASP homolog-associated protein with actin, membranes and microtubules-like protein 1 (WHAMMP3).